The primary structure comprises 556 residues: Formate--tetrahydrofolate ligase (556 aa).

65-72 (TPAGEGKS) serves as a coordination point for ATP.

The protein belongs to the formate--tetrahydrofolate ligase family.

It carries out the reaction (6S)-5,6,7,8-tetrahydrofolate + formate + ATP = (6R)-10-formyltetrahydrofolate + ADP + phosphate. It functions in the pathway one-carbon metabolism; tetrahydrofolate interconversion. The protein is Formate--tetrahydrofolate ligase of Clostridium beijerinckii (strain ATCC 51743 / NCIMB 8052) (Clostridium acetobutylicum).